The primary structure comprises 209 residues: MEVKVLDFNGKDTGRKVQLSDSVFAIEPNNHAVYLDVKQYLANQRQGTHKAKERAEVTGSTRKIKKQKGTGTARAGSVKNPLFKGGGTVFGPRPRSYSFKLNKNLKRLARKSAFSIKAKESNIIVLEDFNFEAPNTKNFINVLKALGLENKKSLFVLGESNKNVYLSSRNLKASNVVTSSELSTYAILNTNNLVLLEGSLELIEENLSK.

The interval 45 to 77 is disordered; the sequence is RQGTHKAKERAEVTGSTRKIKKQKGTGTARAGS.

This sequence belongs to the universal ribosomal protein uL4 family. In terms of assembly, part of the 50S ribosomal subunit.

Functionally, one of the primary rRNA binding proteins, this protein initially binds near the 5'-end of the 23S rRNA. It is important during the early stages of 50S assembly. It makes multiple contacts with different domains of the 23S rRNA in the assembled 50S subunit and ribosome. Forms part of the polypeptide exit tunnel. The protein is Large ribosomal subunit protein uL4 of Flavobacterium johnsoniae (strain ATCC 17061 / DSM 2064 / JCM 8514 / BCRC 14874 / CCUG 350202 / NBRC 14942 / NCIMB 11054 / UW101) (Cytophaga johnsonae).